The following is a 487-amino-acid chain: Betaine aldehyde dehydrogenase (487 aa).

Isoleucine 27 and aspartate 93 together coordinate K(+). 149–151 is a binding site for NAD(+); it reads GAW. Lysine 161 functions as the Charge relay system in the catalytic mechanism. NAD(+)-binding positions include 175 to 178 and 228 to 231; these read KPSE and SVPT. The active-site Proton acceptor is glutamate 249. 3 residues coordinate NAD(+): glycine 251, cysteine 283, and glutamate 384. Cysteine 283 serves as the catalytic Nucleophile. Cysteine sulfenic acid (-SOH) is present on cysteine 283. K(+) is bound by residues lysine 454 and glycine 457. Glutamate 461 functions as the Charge relay system in the catalytic mechanism.

Belongs to the aldehyde dehydrogenase family. Dimer of dimers. K(+) serves as cofactor.

The catalysed reaction is betaine aldehyde + NAD(+) + H2O = glycine betaine + NADH + 2 H(+). The protein operates within amine and polyamine biosynthesis; betaine biosynthesis via choline pathway; betaine from betaine aldehyde: step 1/1. In terms of biological role, involved in the biosynthesis of the osmoprotectant glycine betaine. Catalyzes the irreversible oxidation of betaine aldehyde to the corresponding acid. The sequence is that of Betaine aldehyde dehydrogenase from Mesorhizobium japonicum (strain LMG 29417 / CECT 9101 / MAFF 303099) (Mesorhizobium loti (strain MAFF 303099)).